The primary structure comprises 463 residues: Glycine--tRNA ligase (463 aa).

Substrate-binding residues include arginine 102 and glutamate 165. Residues arginine 197–glutamate 199, phenylalanine 207–phenylalanine 212, glutamate 284–leucine 285, and glycine 328–arginine 331 each bind ATP. Substrate is bound at residue phenylalanine 212–glutamate 216. Glutamate 324–glycine 328 serves as a coordination point for substrate.

This sequence belongs to the class-II aminoacyl-tRNA synthetase family. Homodimer.

The protein localises to the cytoplasm. It carries out the reaction tRNA(Gly) + glycine + ATP = glycyl-tRNA(Gly) + AMP + diphosphate. Catalyzes the attachment of glycine to tRNA(Gly). In Mycobacterium bovis (strain ATCC BAA-935 / AF2122/97), this protein is Glycine--tRNA ligase.